The sequence spans 309 residues: Sulfate adenylyltransferase subunit 2 (309 aa).

It belongs to the PAPS reductase family. CysD subfamily. Heterodimer composed of CysD, the smaller subunit, and CysN.

The enzyme catalyses sulfate + ATP + H(+) = adenosine 5'-phosphosulfate + diphosphate. It functions in the pathway sulfur metabolism; hydrogen sulfide biosynthesis; sulfite from sulfate: step 1/3. With CysN forms the ATP sulfurylase (ATPS) that catalyzes the adenylation of sulfate producing adenosine 5'-phosphosulfate (APS) and diphosphate, the first enzymatic step in sulfur assimilation pathway. APS synthesis involves the formation of a high-energy phosphoric-sulfuric acid anhydride bond driven by GTP hydrolysis by CysN coupled to ATP hydrolysis by CysD. The polypeptide is Sulfate adenylyltransferase subunit 2 (Aeromonas salmonicida (strain A449)).